The sequence spans 202 residues: U-Kazal-Dg21.2 (202 aa).

The first 20 residues, 1-20, serve as a signal peptide directing secretion; it reads MKYFLWSAVTIFAIVNVVGA. Residues 21 to 87 constitute a propeptide that is removed on maturation; the sequence is KNSDFDPRCL…SFCQVEEDFD (67 aa). Kazal-like domains are found at residues 23–77, 85–140, and 148–202; these read SDFD…KTLM, DFDS…ICRN, and IDPK…KGEC. Intrachain disulfides connect C29-C62, C33-C55, C91-C124, C95-C117, and C103-C138. N-linked (GlcNAc...) asparagine glycosylation occurs at N140. The propeptide occupies 142–202; it reads SFKSELIDPK…NWTLIRKGEC (61 aa). Disulfide bonds link C154–C187, C158–C180, and C166–C202. N193 carries an N-linked (GlcNAc...) asparagine glycan.

As to expression, expressed by the venom gland.

It is found in the secreted. Its function is as follows. May act as a serine protease inhibitor, since it possess the kazal serine protease inhibitor signature. The recombinant peptide does not produce toxic effects on insects. The polypeptide is U-Kazal-Dg21.2 (Dolopus genitalis (Giant Australian assassin fly)).